Reading from the N-terminus, the 122-residue chain is uncharacterized protein (122 aa).

2 helical membrane-spanning segments follow: residues 9–29 and 60–80; these read VATV…STWV and LFSF…CLIM.

It localises to the cytoplasm. It is found in the membrane. This is an uncharacterized protein from Schizosaccharomyces pombe (strain 972 / ATCC 24843) (Fission yeast).